The sequence spans 247 residues: MSNSKIYFEDRSIVTPGDLIAEGDFQIPWSPYYYKIGNKYYSSITGLIEVKENLFEIVPLEGHRYIPKVGDTVIGLIEDVEIYGWVLDIKSPYSAYLPASSFLGRPVSPGEDLRRYLNLGDYVIAKIETYDRTINPILSIKGKGLGRVSSGIVIDIPPVKVPRVIGKNRSMLDTLTSETGCEILVAQNGRILANCATKMIEEALVEAIQIIEKESHIKGLTEKIRKFLREKLGETKNDSATKTEANT.

In terms of domain architecture, S1 motif spans 70–143; the sequence is GDTVIGLIED…INPILSIKGK (74 aa). In terms of domain architecture, KH spans 149–211; that stretch reads SSGIVIDIPP…EALVEAIQII (63 aa).

This sequence belongs to the RRP4 family. Component of the archaeal exosome complex. Forms a trimer of Rrp4 and/or Csl4 subunits. The trimer associates with a hexameric ring-like arrangement composed of 3 Rrp41-Rrp42 heterodimers.

Its subcellular location is the cytoplasm. In terms of biological role, non-catalytic component of the exosome, which is a complex involved in RNA degradation. Increases the RNA binding and the efficiency of RNA degradation. Confers strong poly(A) specificity to the exosome. This Sulfurisphaera tokodaii (strain DSM 16993 / JCM 10545 / NBRC 100140 / 7) (Sulfolobus tokodaii) protein is Exosome complex component Rrp4.